The primary structure comprises 135 residues: ATP synthase epsilon chain (135 aa).

This sequence belongs to the ATPase epsilon chain family. In terms of assembly, F-type ATPases have 2 components, CF(1) - the catalytic core - and CF(0) - the membrane proton channel. CF(1) has five subunits: alpha(3), beta(3), gamma(1), delta(1), epsilon(1). CF(0) has three main subunits: a, b and c.

The protein resides in the cell inner membrane. Functionally, produces ATP from ADP in the presence of a proton gradient across the membrane. This chain is ATP synthase epsilon chain, found in Chelativorans sp. (strain BNC1).